The chain runs to 1230 residues: ATP-dependent helicase/nuclease subunit A (1230 aa).

Positions 4–480 (RNWTGPQEAA…IDLSHNFRSR (477 aa)) constitute a UvrD-like helicase ATP-binding domain. An ATP-binding site is contributed by 25–32 (AGAGSGKT). The region spanning 517-799 (AQLEGSGPPV…RIMSIHQAKG (283 aa)) is the UvrD-like helicase C-terminal domain. Positions 535 to 554 (TSVGRDTAGTADDEPDRSDE) are disordered. Residues 545–554 (ADDEPDRSDE) show a composition bias toward acidic residues.

The protein belongs to the helicase family. AddA subfamily. In terms of assembly, heterodimer of AddA and AddB/RexB. Mg(2+) is required as a cofactor.

It carries out the reaction Couples ATP hydrolysis with the unwinding of duplex DNA by translocating in the 3'-5' direction.. The catalysed reaction is ATP + H2O = ADP + phosphate + H(+). In terms of biological role, the heterodimer acts as both an ATP-dependent DNA helicase and an ATP-dependent, dual-direction single-stranded exonuclease. Recognizes the chi site generating a DNA molecule suitable for the initiation of homologous recombination. The AddA nuclease domain is required for chi fragment generation; this subunit has the helicase and 3' -&gt; 5' nuclease activities. This Desulforudis audaxviator (strain MP104C) protein is ATP-dependent helicase/nuclease subunit A.